A 173-amino-acid polypeptide reads, in one-letter code: Trafficking regulator of GLUT4 1 (173 aa).

Residues 1-10 (MANPAQPPLQ) are compositionally biased toward pro residues. Residues 1–20 (MANPAQPPLQDPGSTSPLEL) are disordered. Over 1 to 102 (MANPAQPPLQ…QDQEAPKDYL (102 aa)) the chain is Cytoplasmic. Serine 16, serine 43, serine 45, serine 70, serine 84, and serine 85 each carry phosphoserine. The segment at residues 103-123 (VLAIASCFCPVWPLNLIPLIF) is an intramembrane region (helical). The Cytoplasmic portion of the chain corresponds to 124–150 (SIMSRSSVQQGDLDGARRLGRLARLLS). The helical transmembrane segment at 151 to 171 (ITFIILGIVIIIVAVTVNFTV) threads the bilayer. At 172-173 (PK) the chain is on the extracellular side.

Belongs to the CD225/Dispanin family. In terms of assembly, interacts with SLC2A4; the interaction is required for proper SLC2A4 reacycling after insulin stimulation. As to expression, expressed specifically in white and brown adipose tissues.

It localises to the cell membrane. The protein resides in the endomembrane system. The protein localises to the cytoplasm. It is found in the perinuclear region. Functionally, regulates insulin-mediated adipose tissue glucose uptake and transport by modulation of SLC2A4 recycling. Not required for SLC2A4 membrane fusion upon an initial stimulus, but rather is necessary for proper protein recycling during prolonged insulin stimulation. The polypeptide is Trafficking regulator of GLUT4 1 (Trarg1) (Mus musculus (Mouse)).